Reading from the N-terminus, the 189-residue chain is UPF0398 protein LGAS_1023 (189 aa).

Belongs to the UPF0398 family.

The protein is UPF0398 protein LGAS_1023 of Lactobacillus gasseri (strain ATCC 33323 / DSM 20243 / BCRC 14619 / CIP 102991 / JCM 1131 / KCTC 3163 / NCIMB 11718 / NCTC 13722 / AM63).